Reading from the N-terminus, the 434-residue chain is MKRNNFSAVNKVVQSSPVVKQPKRGLCSSLRQTHALSVLLDWGTLPHHVILQIFQYLPLIDRARASSVCRRWNEVFHIPDLWRKFEFELNQSATSYFKSTHPDLIQQIIKKHAAHLQYVSFKVDSSTESAEAACDILSQLVNCSIQTLGLISTAKPSFMNVPKSHFVSALTVVFVNSKSLSSIKIEDTPVDDPSLKILVANNSDTLRLLKMSSCPHVSSDGILCVADHCQGLRELALNYYILSDEILLALSSETHVNLEHLRIDVVSENPGQIKFHSIKKRSWDALIKHSPRVNVVMYFFLYEEEFEAFFKEETPVTHLYFGRSVSRAILGRIGLNCPRLIELVVCANGLLPLDSELIRIAKHCKNLTSLGLSECEVSCSAFVEFVRLCGRRLTQLSIMEEVLVPDDRYTPDEVHTEVSKHLGRVWFPDVMPIW.

An F-box domain is found at 39–85 (LLDWGTLPHHVILQIFQYLPLIDRARASSVCRRWNEVFHIPDLWRKF). LRR repeat units lie at residues 187–213 (DTPVDDPSLKILVANNSDTLRLLKMSS), 214–239 (CPHVSSDGILCVADHCQGLRELALNY), 242–265 (LSDEILLALSSETHVNLEHLRIDV), 322–347 (GRSVSRAILGRIGLNCPRLIELVVCA), 349–374 (GLLPLDSELIRIAKHCKNLTSLGLSE), and 375–400 (CEVSCSAFVEFVRLCGRRLTQLSIME).

Part of the SCF (SKP1-CUL1-F-box) E3 ubiquitin-protein ligase complex SCF(FBXL21) composed of CUL1, SKP1, RBX1 and FBXL21. Interacts with CRY1 and CRY2. Expressed in the hypothalamus, especially in the suprachiasmatic nucleus (SCN). Expression is driven by the core-clock. There is a pronounced diurnal and circadian expression rhythms rising rapidly at the start of the day and declining at the onset of the night.

It is found in the cytoplasm. It localises to the cytosol. Its subcellular location is the nucleus. It participates in protein modification; protein ubiquitination. Substrate-recognition component of the SCF(FBXL21) E3 ubiquitin ligase complex involved in circadian rhythm function. Plays a key role in the maintenance of both the speed and the robustness of the circadian clock oscillation. The SCF(FBXL21) complex mainly acts in the cytosol and mediates ubiquitination of CRY proteins (CRY1 and CRY2), leading to CRY proteins stabilization. The SCF(FBXL21) complex counteracts the activity of the SCF(FBXL3) complex and protects CRY proteins from degradation. Involved in the hypothalamic suprachiasmatic nucleus (SCN) clock regulating temporal organization of the daily activities. This is F-box/LRR-repeat protein 21 (Fbxl21) from Mus musculus (Mouse).